The sequence spans 287 residues: Pyridoxal 5'-phosphate synthase subunit PdxS (287 aa).

D-ribose 5-phosphate is bound at residue D21. K78 (schiff-base intermediate with D-ribose 5-phosphate) is an active-site residue. G150 contributes to the D-ribose 5-phosphate binding site. R162 provides a ligand contact to D-glyceraldehyde 3-phosphate. D-ribose 5-phosphate contacts are provided by residues G211 and 232 to 233 (GS).

The protein belongs to the PdxS/SNZ family. In terms of assembly, in the presence of PdxT, forms a dodecamer of heterodimers.

The catalysed reaction is aldehydo-D-ribose 5-phosphate + D-glyceraldehyde 3-phosphate + L-glutamine = pyridoxal 5'-phosphate + L-glutamate + phosphate + 3 H2O + H(+). It participates in cofactor biosynthesis; pyridoxal 5'-phosphate biosynthesis. In terms of biological role, catalyzes the formation of pyridoxal 5'-phosphate from ribose 5-phosphate (RBP), glyceraldehyde 3-phosphate (G3P) and ammonia. The ammonia is provided by the PdxT subunit. Can also use ribulose 5-phosphate and dihydroxyacetone phosphate as substrates, resulting from enzyme-catalyzed isomerization of RBP and G3P, respectively. This is Pyridoxal 5'-phosphate synthase subunit PdxS from Tropheryma whipplei (strain TW08/27) (Whipple's bacillus).